A 217-amino-acid chain; its full sequence is Small ribosomal subunit protein uS3c (217 aa).

The KH type-2 domain maps to Ile-43–Ala-117.

The protein belongs to the universal ribosomal protein uS3 family. Part of the 30S ribosomal subunit.

Its subcellular location is the plastid. The protein resides in the chloroplast. This Ranunculus macranthus (Large buttercup) protein is Small ribosomal subunit protein uS3c (rps3).